A 71-amino-acid polypeptide reads, in one-letter code: Small ribosomal subunit protein bS21 (71 aa).

Belongs to the bacterial ribosomal protein bS21 family.

This Buchnera aphidicola subsp. Schizaphis graminum (strain Sg) protein is Small ribosomal subunit protein bS21.